A 447-amino-acid chain; its full sequence is Aladin (447 aa).

The interval 49-69 (STPSSLQENEGQENGDKASGE) is disordered. 4 WD repeats span residues 97–138 (LSEI…EPCI), 142–181 (DSQR…NMAL), 210–250 (QNDE…GTPI), and 252–291 (RGLG…SEPW).

Part of the nuclear pore complex (NPC). The NPC has an eight-fold symmetrical structure comprising a central transport channel and two rings, the cytoplasmic and nuclear rings, to which eight filaments are attached. The cytoplasmic filaments have loose ends, while the nuclear filaments are joined in a distal ring, forming a nuclear basket. NPCs are highly dynamic in configuration and composition, and can be devided in 3 subcomplexes, the NUP62 subcomplex, the NUP107-160 subcomplex and the NUP93 subcomplex, containing approximately 30 different nucleoporin proteins.

It localises to the nucleus envelope. The protein resides in the nucleus. The protein localises to the nuclear pore complex. This is Aladin from Arabidopsis thaliana (Mouse-ear cress).